Consider the following 1377-residue polypeptide: MEDIFNFFDKPKDPLHFSAIRISVSSPEKIRERSFGEVKKPETINYRTFKPERDGLFCAKIFGPTKDYECNCGKYKRMKHRGIVCEKCGVEVIPSKVRRERLGHIDLATPVAHIWFLKSLPSRIGNLMDITLKDLEKVLYFEAYVVTDPKNTGMPFAQVFSEDQYLKAMEEYNGQFEAGMGAAAIRECLMSMDLDVLAEQLRVEMLEATSEAKRKKTAKRLKVVEAFKSSGNKPEWMILECIPVLPPELRPLVPLDGGRFATSDLNDLYRRVINRNNRLKRLMELQAPEVIIRNEKRMLQEAVDALFDNGRRGRAIAGPNKRPLKSLSDMLKGKSGRFRQNLLGKRVDYSGRSVIVVGPELRLHQCGLPKKMALELFKPFIYNKLEEKGFVTTIKSAKKMVEKERPEVWDVLEEVIKEHPVMLNRAPTLHRLGIQAFEPVLIEGKAIQLHPLVCTAFNADFDGDQMAVHLPLSVESQVETRVLMMSTNNILSPAHGKPIIVPSQDMVLGIYYMTREKFFAKGDGKIFASQDEVRIALDADEVDLQARVKVRLKNLATDEKPQLVDTTPGRVVLREILPDEVPFATINKVMTKKELSNLVDVCYRLAGNKETVILADKLKSIGFRYSTIAGISISINDMVIPEGKTAIINRASEDVKEIQNQYTEGLITDGERYNKVIDIWAKSTEEIAKEMLDNLSRDIVHAPDGKEVKVPSFNAIHMMADSGARGSAQQIRQLAGMRGLMAKPSGEIIETPITANFREGLTVLQYFISTHGARKGLADTALKTANSGYLTRRLVDVAQDAIITEPDCGTLDGLVVSSLTEGGEIIEHIGDRILGRVALDDILDPVTGDVLVASNEEIDETLVQKIESAGLEKVKIRSVLTCQSRRGICAKCYGRDLARGHLVNMGEAVGVIAAQSIGEPGTQLTMRTFHIGGTASRRAEQTSLEARTEGSVKFININYVTNTDGHHIVMNRNGELAIVDETGREREKYSILYGAKIKVNVGQVIKQGEAIAEWDPYTMPILTEIAGKVKFGDIIEGVSMEEQVDEVTGLSRKVVVESRDADKRPRITIKDEAGKTAKINETTMGRYYLPVGANITVQEDAVVNAGDVIAKIPRETTKTKDITGGLPRVAELFEARKPKDFAVITEIDGIVTFGKDAKGKRKVIVTPEMGEPKEYLIPKGKHISVHEGDHVRAGEALMDGSSNPHDILRVLGQKELAKYLVDEVQEVYRLQGVKINDKHIETIVRQMLRRVRIKDVGDTTLLIDDQLERYIFEDENERVLDKGGKPAIAEPLLLGITKASLSTESFISAASFQETTKVLTQASIEGKIDGLRGLKENVIMGRLIPAGTGLARYRNLKLVAEEPVVTPSEQVEEVAAG.

Zn(2+) is bound by residues cysteine 70, cysteine 72, cysteine 85, and cysteine 88. 3 residues coordinate Mg(2+): aspartate 460, aspartate 462, and aspartate 464. Residues cysteine 808, cysteine 882, cysteine 889, and cysteine 892 each coordinate Zn(2+).

This sequence belongs to the RNA polymerase beta' chain family. The RNAP catalytic core consists of 2 alpha, 1 beta, 1 beta' and 1 omega subunit. When a sigma factor is associated with the core the holoenzyme is formed, which can initiate transcription. The cofactor is Mg(2+). It depends on Zn(2+) as a cofactor.

It carries out the reaction RNA(n) + a ribonucleoside 5'-triphosphate = RNA(n+1) + diphosphate. Functionally, DNA-dependent RNA polymerase catalyzes the transcription of DNA into RNA using the four ribonucleoside triphosphates as substrates. In Geotalea daltonii (strain DSM 22248 / JCM 15807 / FRC-32) (Geobacter daltonii), this protein is DNA-directed RNA polymerase subunit beta'.